The chain runs to 423 residues: Heat shock transcription factor, X-linked (423 aa).

Positions 1–25 are enriched in basic and acidic residues; the sequence is MEDKRSLSMARCEERNSRGQDHGLE. Disordered regions lie at residues 1–56, 215–303, and 397–423; these read MEDK…STGS, KSAP…EGSQ, and PHSHRTSQYMPASDGPQAYPDYADQST. A DNA-binding region spans residues 98–282; it reads PFPQKLWRLV…PATPVMVPDS (185 aa). Lysine 215 participates in a covalent cross-link: Glycyl lysine isopeptide (Lys-Gly) (interchain with G-Cter in SUMO1). A compositionally biased stretch (polar residues) spans 243–254; sequence HTSPNENDQVTP.

This sequence belongs to the HSF family. As to expression, testis-specific.

The protein localises to the nucleus. Its subcellular location is the cytoplasm. This is Heat shock transcription factor, X-linked (HSFX1) from Homo sapiens (Human).